The sequence spans 475 residues: Ribulose bisphosphate carboxylase large chain (475 aa).

The propeptide occupies 1–2 (MS). Position 3 is an N-acetylproline (P3). The residue at position 14 (K14) is an N6,N6,N6-trimethyllysine. Substrate is bound by residues N123 and T173. The active-site Proton acceptor is K175. Substrate is bound at residue K177. Positions 201, 203, and 204 each coordinate Mg(2+). K201 carries the N6-carboxylysine modification. H294 (proton acceptor) is an active-site residue. Substrate-binding residues include R295, H327, and S379.

Belongs to the RuBisCO large chain family. Type I subfamily. Heterohexadecamer of 8 large chains and 8 small chains; disulfide-linked. The disulfide link is formed within the large subunit homodimers. The cofactor is Mg(2+). Post-translationally, the disulfide bond which can form in the large chain dimeric partners within the hexadecamer appears to be associated with oxidative stress and protein turnover.

It localises to the plastid. Its subcellular location is the chloroplast. It carries out the reaction 2 (2R)-3-phosphoglycerate + 2 H(+) = D-ribulose 1,5-bisphosphate + CO2 + H2O. The enzyme catalyses D-ribulose 1,5-bisphosphate + O2 = 2-phosphoglycolate + (2R)-3-phosphoglycerate + 2 H(+). In terms of biological role, ruBisCO catalyzes two reactions: the carboxylation of D-ribulose 1,5-bisphosphate, the primary event in carbon dioxide fixation, as well as the oxidative fragmentation of the pentose substrate in the photorespiration process. Both reactions occur simultaneously and in competition at the same active site. The protein is Ribulose bisphosphate carboxylase large chain of Gossypium hirsutum (Upland cotton).